The primary structure comprises 551 residues: Peptidyl-prolyl cis-trans isomerase-like 4 (551 aa).

The 185-residue stretch at 1–185 folds into the PPIase cyclophilin-type domain; sequence MSVLLETSLG…RDIRIRHVVV (185 aa). Positions 54–88 are disordered; sequence GDPSNTGKGGASIWSQLPSTSQDSSTSTYFTPESS. Residues 66–88 show a composition bias toward polar residues; that stretch reads IWSQLPSTSQDSSTSTYFTPESS. An RRM domain is found at 262-340; sequence NILFVCKLNP…RRIWVDFSQS (79 aa). The tract at residues 352-551 is disordered; that stretch reads RNAGSDAPRA…RQRSRDGSRR (200 aa). Basic and acidic residues-rich tracts occupy residues 384–397 and 408–454; these read KRGD…RDQP and SRQD…SHRD. Over residues 455-464 the composition is skewed to basic residues; it reads HERHHLSRHV. Residues 465-551 are compositionally biased toward basic and acidic residues; it reads RPSDEGESKC…RQRSRDGSRR (87 aa).

Belongs to the cyclophilin-type PPIase family. PPIL4 subfamily.

The protein resides in the nucleus. It carries out the reaction [protein]-peptidylproline (omega=180) = [protein]-peptidylproline (omega=0). Its function is as follows. PPIases accelerate the folding of proteins. It catalyzes the cis-trans isomerization of proline imidic peptide bonds in oligopeptides. This Mycosarcoma maydis (Corn smut fungus) protein is Peptidyl-prolyl cis-trans isomerase-like 4 (CYP6).